A 95-amino-acid polypeptide reads, in one-letter code: Large ribosomal subunit protein bL21 (95 aa).

This sequence belongs to the bacterial ribosomal protein bL21 family. In terms of assembly, part of the 50S ribosomal subunit. Contacts protein L20.

In terms of biological role, this protein binds to 23S rRNA in the presence of protein L20. The chain is Large ribosomal subunit protein bL21 from Chlorobaculum tepidum (strain ATCC 49652 / DSM 12025 / NBRC 103806 / TLS) (Chlorobium tepidum).